Consider the following 276-residue polypeptide: MDLWVAIQALILGVVEGITEFLPVSSTGHQIIVADLIGFGGERALAFNIIIQLGAILAVIWEYRRKIIDVVVGLPEERQAQKFTVNLLIAFMPAVVLGVAFADLIHEYLFNPITVAAALVIGGIVMLWAERRDHAIRAETVDDMTWTLALKVGFAQCLALVPGTSRSGSTIIGGLLFGLSRKAATEFSFFLAMPTMVGAAVYSGYKYRDLFQPGDFAVFAIGFVTSFIFAMLAVRALLKFIGNHSYAAFAWYRIGFGLLILATWQLGMIDWSTAIG.

Transmembrane regions (helical) follow at residues 44-63 (ALAF…IWEY), 85-105 (VNLL…ADLI), 109-129 (LFNP…MLWA), 183-203 (AATE…AVYS), 214-234 (GDFA…MLAV), and 249-269 (FAWY…LGMI).

It belongs to the UppP family.

It is found in the cell inner membrane. It catalyses the reaction di-trans,octa-cis-undecaprenyl diphosphate + H2O = di-trans,octa-cis-undecaprenyl phosphate + phosphate + H(+). Catalyzes the dephosphorylation of undecaprenyl diphosphate (UPP). Confers resistance to bacitracin. The polypeptide is Undecaprenyl-diphosphatase 1 (Stutzerimonas stutzeri (strain A1501) (Pseudomonas stutzeri)).